A 502-amino-acid chain; its full sequence is Beta-amyrin 28-monooxygenase CYP716A379 (502 aa).

A helical; Signal-anchor for type II membrane protein membrane pass occupies residues 3-23; sequence LITLLSALLVLAIVSLSTFFV. 2 N-linked (GlcNAc...) asparagine glycosylation sites follow: asparagine 88 and asparagine 181. Cysteine 444 is a heme binding site.

This sequence belongs to the cytochrome P450 family. Heme serves as cofactor. In terms of tissue distribution, mainly expressed in flowers and flower buds, to a lesser extent in young leaves and, at low levels, in old leaves, stems and roots.

Its subcellular location is the membrane. It catalyses the reaction beta-amyrin + 3 reduced [NADPH--hemoprotein reductase] + 3 O2 = oleanolate + 3 oxidized [NADPH--hemoprotein reductase] + 4 H2O + 4 H(+). It functions in the pathway secondary metabolite biosynthesis; terpenoid biosynthesis. Functionally, component of the oleanane-type triterpene saponins (e.g. saponarioside A and saponarioside B) biosynthetic pathway, leading to the production of natural products with detergent properties used as traditional sources of soap. An oxidoreductase that facilitates the oxidation of the methyl group to a carboxyl group at the C-28 position of beta-amyrin, resulting in the formation of oleanolic acid. Catalyzes also the subsequent oxidation of the methyl group to a&lt; carboxyl group at the C-16 alpha position of oleanolic acid, resulting in the formation of echinocystic acid. The sequence is that of Beta-amyrin 28-monooxygenase CYP716A379 from Saponaria officinalis (Common soapwort).